The following is a 477-amino-acid chain: Chaperonin GroEL 2 (477 aa).

Residues 29–32 (TLGP), 86–90 (DGTTT), and Gly-416 contribute to the ATP site.

It belongs to the chaperonin (HSP60) family. In terms of assembly, forms a cylinder of 14 subunits composed of two heptameric rings stacked back-to-back. Interacts with the co-chaperonin GroES.

It is found in the cytoplasm. It catalyses the reaction ATP + H2O + a folded polypeptide = ADP + phosphate + an unfolded polypeptide.. Its function is as follows. Together with its co-chaperonin GroES, plays an essential role in assisting protein folding. The GroEL-GroES system forms a nano-cage that allows encapsulation of the non-native substrate proteins and provides a physical environment optimized to promote and accelerate protein folding. This chain is Chaperonin GroEL 2, found in Streptomyces lividans.